The chain runs to 167 residues: Small ribosomal subunit protein uS9 (167 aa).

A disordered region spans residues 1–41; sequence MNTEAVAPDVAEEEVLTSYTSESSASADDAPKKERPALTVS. Polar residues predominate over residues 17–26; that stretch reads TSYTSESSAS.

Belongs to the universal ribosomal protein uS9 family.

This is Small ribosomal subunit protein uS9 from Renibacterium salmoninarum (strain ATCC 33209 / DSM 20767 / JCM 11484 / NBRC 15589 / NCIMB 2235).